The chain runs to 287 residues: Uroplakin-3a (287 aa).

Residues 1-18 (MPPLWVVLALGCLRLGSG) form the signal peptide. Topologically, residues 19-207 (VNLQPQLASV…DTWPGRRSGG (189 aa)) are lumenal. Asn-74, Asn-139, and Asn-170 each carry an N-linked (GlcNAc...) asparagine glycan. Residues 208–235 (MIVITSILGSLPFFLLIGFAGAIVLSLV) form a helical membrane-spanning segment. Residues 236-287 (DRGDADGATSHDSQITQEAVPKSLGTSEPSYTSVNRGPSLDRAEVYASKLQD) are Cytoplasmic-facing. The disordered stretch occupies residues 243-274 (ATSHDSQITQEAVPKSLGTSEPSYTSVNRGPS). Residues 259 to 271 (LGTSEPSYTSVNR) show a composition bias toward polar residues.

It belongs to the uroplakin-3 family. In terms of assembly, heterodimer with uroplakin-1B (UPK1B). As to expression, bladder epithelium.

It localises to the endoplasmic reticulum membrane. Its function is as follows. Component of the asymmetric unit membrane (AUM); a highly specialized biomembrane elaborated by terminally differentiated urothelial cells. May play an important role in AUM-cytoskeleton interaction in terminally differentiated urothelial cells. It also contributes to the formation of urothelial glycocalyx which may play an important role in preventing bacterial adherence. The polypeptide is Uroplakin-3a (UPK3A) (Bos taurus (Bovine)).